A 115-amino-acid chain; its full sequence is Peptidyl-tRNA hydrolase (115 aa).

It belongs to the PTH2 family.

It is found in the cytoplasm. It carries out the reaction an N-acyl-L-alpha-aminoacyl-tRNA + H2O = an N-acyl-L-amino acid + a tRNA + H(+). In terms of biological role, the natural substrate for this enzyme may be peptidyl-tRNAs which drop off the ribosome during protein synthesis. This Archaeoglobus fulgidus (strain ATCC 49558 / DSM 4304 / JCM 9628 / NBRC 100126 / VC-16) protein is Peptidyl-tRNA hydrolase.